The following is a 1346-amino-acid chain: G-protein coupled receptor-associated sorting protein 1 (1346 aa).

3 disordered regions span residues 1 to 101 (MTGA…FRGE), 144 to 177 (TESIPKKASSPARFQPSFGPEEGTSMGSWYRPRP), and 192 to 258 (ADKS…SAKT). Over residues 21–36 (ENANAAEVEPEVPLVV) the composition is skewed to low complexity. Over residues 211–226 (FRPRKSMKSNTRFRHM) the composition is skewed to basic residues. Residue S295 is modified to Phosphoserine. Disordered stretches follow at residues 311–399 (EEAK…RPEE) and 461–485 (VSSFCLGSGKKTSMESGPKATSKSM). The span at 316–333 (RSKPRARKGVNMRARHQA) shows a compositional bias: basic residues. Composition is skewed to basic and acidic residues over residues 347 to 361 (DKNKKDSWFLPEEKA) and 370 to 399 (KKEPRTRAMPREEVKTKARASTKQEARPEE). The span at 461–484 (VSSFCLGSGKKTSMESGPKATSKS) shows a compositional bias: polar residues. 2 positions are modified to phosphoserine: S619 and S626. T860 bears the Phosphothreonine mark. S862 bears the Phosphoserine mark. The tract at residues 984–1004 (ACEPESSTEHEPDPSRRPQSW) is disordered. The segment covering 990-1003 (STEHEPDPSRRPQS) has biased composition (basic and acidic residues).

The protein belongs to the GPRASP family. Interacts with cytoplasmic tails of a variety of G-protein coupled receptors such as delta opioid receptor/OPRD1, beta-2 adrenergic receptor/ADRB2 and D4 dopamine receptor/DRD4. Interacts with BECN2; the interaction is direct and with D2 dopamine receptor/DRD2. Interacts with PER1. Expressed in the brain.

The protein localises to the cytoplasm. Functionally, modulates lysosomal sorting and functional down-regulation of a variety of G-protein coupled receptors. Targets receptors for degradation in lysosomes via its interaction with BECN2. The sequence is that of G-protein coupled receptor-associated sorting protein 1 (Gprasp1) from Rattus norvegicus (Rat).